Reading from the N-terminus, the 570-residue chain is MLTDMEISSRASLTNVAELGAELGLLPEEMLLFGSTKAKVDLSVQQRLAGQSRGKLIIVTAVTPTPHGEGKTVTSIGLTQSLKAIGKKACACIRQPSMGPVFGVKGGAAGGGYAQVVPMQELNLHLTGDIHAVSSAHNLGAAAIAARLFHESRLGKVEFEAQSGQAFLDIDPAQIRWHRVLDHNDRCLRQVQVGLGENNGPVYESGFDITAASELMAILALSANLADMRARIGRLVLALNRQGQVISAEDLGVAGAMTAIMVDAIKPTLMQTLNGAPCLIHAGPFANIAHGNSSIIADDIALKLVDYVITEGGFGSDMGFEKFCNIKVRQSGQVPSAAVLVTTLKALKANSGIESDTDINTPDEIRLEAGFANLHWHINNVARYGIPVVVAINRFATDTEAELQWLINAVNQTAAFGCEVSDAFSQGEAGAIELAHTVVRAADTQSQFRLLYPDDASLEAKLSTLAEVGYGAAGISLSDEAKQQVREFTSLGYAHLPVCMAKTPLSISHDPIQKGVPKDFIVPIRALVLNAGAGFVTALVGNVMTMPGLGIKPGYLKIDIDEAGEIIGLG.

Residue 65–72 (TPHGEGKT) coordinates ATP.

Belongs to the formate--tetrahydrofolate ligase family.

It catalyses the reaction (6S)-5,6,7,8-tetrahydrofolate + formate + ATP = (6R)-10-formyltetrahydrofolate + ADP + phosphate. It functions in the pathway one-carbon metabolism; tetrahydrofolate interconversion. The protein is Formate--tetrahydrofolate ligase of Shewanella putrefaciens (strain CN-32 / ATCC BAA-453).